Here is a 287-residue protein sequence, read N- to C-terminus: Ribonuclease Z (287 aa).

Positions 64, 66, 68, 69, 124, 191, and 250 each coordinate Zn(2+). D68 acts as the Proton acceptor in catalysis.

The protein belongs to the RNase Z family. As to quaternary structure, homodimer. Zn(2+) serves as cofactor.

It carries out the reaction Endonucleolytic cleavage of RNA, removing extra 3' nucleotides from tRNA precursor, generating 3' termini of tRNAs. A 3'-hydroxy group is left at the tRNA terminus and a 5'-phosphoryl group is left at the trailer molecule.. In terms of biological role, zinc phosphodiesterase, which displays some tRNA 3'-processing endonuclease activity. Probably involved in tRNA maturation, by removing a 3'-trailer from precursor tRNA. This chain is Ribonuclease Z, found in Pyrobaculum calidifontis (strain DSM 21063 / JCM 11548 / VA1).